The chain runs to 513 residues: MQLNSTEISDLIKQRIEQFEVVSESRNEGTIVAVSDGIIRIHGLADVMQGEMIELPGSRFAIALNLERDSVGAVVMGPYADLAEGVKVKTTGRILEVPVGRGLLGRVVNTLGEPIDGKGAIDNDGFSPVEVIAPGVIERKSVDQPVQTGYKAVDAMIPIGRGQRELIIGDRQTGKTAMAIDAIINQRDSGIKCVYVAVGQKASTIANVVRKLEEHGALANTIVVVATASEAAALQYLAPYSGCAMGEYFRDRGEDALIVYDDLSKQAVAYRQISLLLKRPPGREAYPGDVFYLHSRLLERASRVNEEYVEKFTKGAVTGQTGSLTALPIIETQAGDVSAFVPTNVISITDGQIFLETDLFNSGLRPAVNPGISVSRVGGAAQTKIIKKLSGGIRTALAQYRELAAFSQFASDLDDATRAQLEHGVRVTELMKQKQYAPMSVAAQAVSIFAAEKGYLKGVELNKVGDFEAALLSYMNSEHAALIKLINETGDYNADIEAELKAGLDKFVATQTW.

169-176 provides a ligand contact to ATP; sequence GDRQTGKT.

The protein belongs to the ATPase alpha/beta chains family. As to quaternary structure, F-type ATPases have 2 components, CF(1) - the catalytic core - and CF(0) - the membrane proton channel. CF(1) has five subunits: alpha(3), beta(3), gamma(1), delta(1), epsilon(1). CF(0) has three main subunits: a(1), b(2) and c(9-12). The alpha and beta chains form an alternating ring which encloses part of the gamma chain. CF(1) is attached to CF(0) by a central stalk formed by the gamma and epsilon chains, while a peripheral stalk is formed by the delta and b chains.

It localises to the cell inner membrane. The enzyme catalyses ATP + H2O + 4 H(+)(in) = ADP + phosphate + 5 H(+)(out). Its function is as follows. Produces ATP from ADP in the presence of a proton gradient across the membrane. The alpha chain is a regulatory subunit. This is ATP synthase subunit alpha from Shewanella sp. (strain MR-4).